Here is a 78-residue protein sequence, read N- to C-terminus: Surfactant-associated protein 2 (78 aa).

The signal sequence occupies residues 1–19 (MGSGLPLVLLLTLLGSSHG). A glycan (N-linked (GlcNAc...) asparagine) is linked at Asn-37.

N-glycosylated. As to expression, predominantly expressed in lung, where it is detected in type II pneumocytes in the alveolus, and in nonciliated epithelium in bronchioli (at protein level). Also detected at lower levels in cervix, esophagus, stomach, testis and kidney.

The protein localises to the secreted. Its subcellular location is the cytoplasmic vesicle. It localises to the secretory vesicle. The protein resides in the golgi apparatus. Its function is as follows. Putative surfactant protein. The protein is Surfactant-associated protein 2 (SFTA2) of Homo sapiens (Human).